The sequence spans 337 residues: Heme A synthase (337 aa).

Transmembrane regions (helical) follow at residues 6-26 (ITKWLCISCIMVIATIVIGGI), 87-107 (FIHRLLGRITALIYIVPLIYF), 119-139 (LPYIIALWLFCVQGFMGWYMV), 154-174 (LAFHLIIAVIIYHILFYQLIK), and 192-212 (LIFSGIAITVVYVQIFLGALV). His256 is a heme binding site. The next 3 helical transmembrane spans lie at 258 to 278 (LGGYSVFLVVVVLIICLLKIE), 285 to 305 (IAYFLMIALLMQVSTGIITLL), and 308 to 328 (VPIIIASIHQLFAVILLSIII). His316 lines the heme pocket.

The protein belongs to the COX15/CtaA family. Type 2 subfamily. As to quaternary structure, interacts with CtaB. It depends on heme b as a cofactor.

The protein localises to the cell membrane. The catalysed reaction is Fe(II)-heme o + 2 A + H2O = Fe(II)-heme a + 2 AH2. It participates in porphyrin-containing compound metabolism; heme A biosynthesis; heme A from heme O: step 1/1. In terms of biological role, catalyzes the conversion of heme O to heme A by two successive hydroxylations of the methyl group at C8. The first hydroxylation forms heme I, the second hydroxylation results in an unstable dihydroxymethyl group, which spontaneously dehydrates, resulting in the formyl group of heme A. The protein is Heme A synthase of Rickettsia massiliae (strain Mtu5).